The sequence spans 121 residues: Small ribosomal subunit protein uS13 (121 aa).

The segment at 92–121 (HRMGLPCRGQKTKTNARTRKGPRRGAARRK) is disordered. Over residues 101–121 (QKTKTNARTRKGPRRGAARRK) the composition is skewed to basic residues.

This sequence belongs to the universal ribosomal protein uS13 family. As to quaternary structure, part of the 30S ribosomal subunit. Forms a loose heterodimer with protein S19. Forms two bridges to the 50S subunit in the 70S ribosome.

In terms of biological role, located at the top of the head of the 30S subunit, it contacts several helices of the 16S rRNA. In the 70S ribosome it contacts the 23S rRNA (bridge B1a) and protein L5 of the 50S subunit (bridge B1b), connecting the 2 subunits; these bridges are implicated in subunit movement. Contacts the tRNAs in the A and P-sites. In Desulfotalea psychrophila (strain LSv54 / DSM 12343), this protein is Small ribosomal subunit protein uS13.